The following is a 414-amino-acid chain: Serine hydroxymethyltransferase (414 aa).

(6S)-5,6,7,8-tetrahydrofolate contacts are provided by residues leucine 117 and 121–123 (GHL). Lysine 226 carries the post-translational modification N6-(pyridoxal phosphate)lysine.

This sequence belongs to the SHMT family. In terms of assembly, homodimer. The cofactor is pyridoxal 5'-phosphate.

The protein localises to the cytoplasm. It carries out the reaction (6R)-5,10-methylene-5,6,7,8-tetrahydrofolate + glycine + H2O = (6S)-5,6,7,8-tetrahydrofolate + L-serine. It functions in the pathway one-carbon metabolism; tetrahydrofolate interconversion. The protein operates within amino-acid biosynthesis; glycine biosynthesis; glycine from L-serine: step 1/1. In terms of biological role, catalyzes the reversible interconversion of serine and glycine with tetrahydrofolate (THF) serving as the one-carbon carrier. This reaction serves as the major source of one-carbon groups required for the biosynthesis of purines, thymidylate, methionine, and other important biomolecules. Also exhibits THF-independent aldolase activity toward beta-hydroxyamino acids, producing glycine and aldehydes, via a retro-aldol mechanism. This is Serine hydroxymethyltransferase from Dictyoglomus thermophilum (strain ATCC 35947 / DSM 3960 / H-6-12).